The sequence spans 200 residues: Putative 3-methyladenine DNA glycosylase (200 aa).

The protein belongs to the DNA glycosylase MPG family.

The chain is Putative 3-methyladenine DNA glycosylase from Shouchella clausii (strain KSM-K16) (Alkalihalobacillus clausii).